The following is a 394-amino-acid chain: Deoxyguanosinetriphosphate triphosphohydrolase-like protein (394 aa).

A disordered region spans residues 1–36 (MSQAPYFVPRAPYAEDPSKSKGRRFKEDESRTRTPF). Basic and acidic residues predominate over residues 25–36 (FKEDESRTRTPF). The 141-residue stretch at 70–210 (RLTHTLEVAQ…AALADDIAYN (141 aa)) folds into the HD domain.

The protein belongs to the dGTPase family. Type 2 subfamily.

The chain is Deoxyguanosinetriphosphate triphosphohydrolase-like protein from Caulobacter vibrioides (strain ATCC 19089 / CIP 103742 / CB 15) (Caulobacter crescentus).